The chain runs to 2376 residues: MAG2-interacting protein 2 (2376 aa).

As to quaternary structure, forms a complex with MAG2, ZW10/MIP1 and MIP3 on the endoplasmic reticulum.

The protein resides in the endoplasmic reticulum membrane. Functionally, required for proper maturation of seed storage proteins. Forms a complex with MAG2, ZW10/MIP1 and MIP3 on the endoplasmic reticulum that may be responsible for efficient transport of seed storage proteins. The sequence is that of MAG2-interacting protein 2 from Arabidopsis thaliana (Mouse-ear cress).